A 707-amino-acid polypeptide reads, in one-letter code: ATP-dependent RNA helicase DHX33 (707 aa).

The interval 1–64 (MPEEAGFPPA…LAQPSASPYP (64 aa)) is disordered. The interval 1 to 80 (MPEEAGFPPA…RRSLPIFQAR (80 aa)) is required for nucleolar location. Residues 39–49 (GSGGRGGGGGR) are compositionally biased toward gly residues. Over residues 50–64 (RQQPPLAQPSASPYP) the composition is skewed to low complexity. In terms of domain architecture, Helicase ATP-binding spans 84–252 (LAQLRNLDNA…FNGAPVLYLE (169 aa)). 97 to 104 (GETGSGKT) lines the ATP pocket. Positions 194 to 197 (DEAH) match the DEAH box motif. One can recognise a Helicase C-terminal domain in the interval 277-450 (SVFQIHQEAP…SVMLQLLAMK (174 aa)). An HA2; required for interaction with EIF3G and RPL26 region spans residues 471-562 (AIAQLDLLGA…ISSEGDHMTL (92 aa)). Residues 547 to 558 (GVRKKFISSEGD) carry the Critical for rDNA-binding motif.

This sequence belongs to the DEAD box helicase family. DEAH subfamily. As to quaternary structure, interacts with UBTF. Interacts with DDX3X, EIF3G and EIF3H; the interaction is independent of RNA. Interacts (via HA2 region and Helicase C-terminal domain) with the components of the large ribosomal subunit RPL3, RPL7, RPL26 and RPL27. Interacts (via DEAH box) with NLRP3 (via NACHT domain). Binds to mRNA. Binds to double-stranded RNA (via the helicase C-terminal domain). Interacts (via the helicase C-terminal domain) with MAVS. Ubiquitinated, leading to its degradation by the proteasome. Deubiquitinated by USP36.

The protein localises to the nucleus. Its subcellular location is the nucleolus. The protein resides in the nucleoplasm. It localises to the cytoplasm. It is found in the inflammasome. The enzyme catalyses ATP + H2O = ADP + phosphate + H(+). In terms of biological role, implicated in nucleolar organization, ribosome biogenesis, protein synthesis and cytoplasmic dsRNA sensing. Stimulates RNA polymerase I transcription of the 47S precursor rRNA. Associates with ribosomal DNA (rDNA) loci where it is involved in POLR1A recruitment. In the cytoplasm, promotes elongation-competent 80S ribosome assembly at the late stage of mRNA translation initiation. Senses cytosolic dsRNA mediating NLRP3 inflammasome formation in macrophages and type I interferon production in myeloid dendritic cells. Required for NLRP3 activation induced by viral dsRNA and bacterial RNA. In dendritic cells, required for induction of type I interferon production induced by cytoplasmic dsRNA via the activation of MAPK and NF-kappa-B signaling pathways. The protein is ATP-dependent RNA helicase DHX33 of Homo sapiens (Human).